The following is a 150-amino-acid chain: Large ribosomal subunit protein eL19 (150 aa).

The segment at 56-90 (RGISSGRLKERKHKRRSKGEGRKHGSRKGKSGART) is disordered.

The protein belongs to the eukaryotic ribosomal protein eL19 family. In terms of assembly, part of the 50S ribosomal subunit.

Its function is as follows. Binds to the 23S rRNA. The polypeptide is Large ribosomal subunit protein eL19 (Sulfolobus acidocaldarius (strain ATCC 33909 / DSM 639 / JCM 8929 / NBRC 15157 / NCIMB 11770)).